Consider the following 381-residue polypeptide: Homoserine O-succinyltransferase (381 aa).

An AB hydrolase-1 domain is found at 45–360; that stretch reads NAVLVCHALN…PHGHDAFLLD (316 aa). The active-site Nucleophile is the S151. Residue R221 participates in substrate binding. Residues D321 and H354 contribute to the active site. D355 is a substrate binding site.

This sequence belongs to the AB hydrolase superfamily. MetX family. Homodimer.

The protein resides in the cytoplasm. It catalyses the reaction L-homoserine + succinyl-CoA = O-succinyl-L-homoserine + CoA. It functions in the pathway amino-acid biosynthesis; L-methionine biosynthesis via de novo pathway; O-succinyl-L-homoserine from L-homoserine: step 1/1. Functionally, transfers a succinyl group from succinyl-CoA to L-homoserine, forming succinyl-L-homoserine. The chain is Homoserine O-succinyltransferase from Burkholderia pseudomallei (strain 1710b).